The primary structure comprises 206 residues: MDLKITTLGGKDAGKVKLSEEIFGLDPREDILQRVVRWQLAKKQQGTHKAKGRAEIARTGAKMYKQKGTGRARHHSARAPQFRGGGKAHGPVVRSHEHDLPKNVRALGLKHALSAKAKSASIIVIDELKLTEAKTKALIANFATLGLSNALVIGGAELDKNFKLAATNIPNIDVLPIQGINVYDILRRGTLVLSKAAVEALEERFK.

Residues M63–R94 form a disordered region. The span at Y64–A77 shows a compositional bias: basic residues.

It belongs to the universal ribosomal protein uL4 family. As to quaternary structure, part of the 50S ribosomal subunit.

In terms of biological role, one of the primary rRNA binding proteins, this protein initially binds near the 5'-end of the 23S rRNA. It is important during the early stages of 50S assembly. It makes multiple contacts with different domains of the 23S rRNA in the assembled 50S subunit and ribosome. Its function is as follows. Forms part of the polypeptide exit tunnel. The chain is Large ribosomal subunit protein uL4 from Mesorhizobium japonicum (strain LMG 29417 / CECT 9101 / MAFF 303099) (Mesorhizobium loti (strain MAFF 303099)).